The following is a 207-amino-acid chain: Thaumatin-like protein 1 (207 aa).

8 disulfides stabilise this stretch: C9–C202, C50–C60, C65–C71, C117–C191, C122–C174, C130–C140, C144–C153, and C154–C161.

Belongs to the thaumatin family. As to quaternary structure, monomer. In terms of processing, not glycosylated.

The protein resides in the secreted. Acidic thaumatin-like protein. Exhibits weak beta-1,3-glucanase activity with laminarin as substrate. The sequence is that of Thaumatin-like protein 1 (TLP1) from Manilkara zapota (Sapodilla plum).